The sequence spans 595 residues: NADH-quinone oxidoreductase subunit C/D (595 aa).

The interval 1-186 is NADH dehydrogenase I subunit C; sequence MVTDNSKATD…TPYFLNNAKQ (186 aa). Residues 210-595 form an NADH dehydrogenase I subunit D region; the sequence is DFMFLNLGPN…IDIVMADTDR (386 aa).

The protein in the N-terminal section; belongs to the complex I 30 kDa subunit family. In the C-terminal section; belongs to the complex I 49 kDa subunit family. As to quaternary structure, NDH-1 is composed of 13 different subunits. Subunits NuoB, CD, E, F, and G constitute the peripheral sector of the complex.

The protein localises to the cell inner membrane. It catalyses the reaction a quinone + NADH + 5 H(+)(in) = a quinol + NAD(+) + 4 H(+)(out). Functionally, NDH-1 shuttles electrons from NADH, via FMN and iron-sulfur (Fe-S) centers, to quinones in the respiratory chain. The immediate electron acceptor for the enzyme in this species is believed to be ubiquinone. Couples the redox reaction to proton translocation (for every two electrons transferred, four hydrogen ions are translocated across the cytoplasmic membrane), and thus conserves the redox energy in a proton gradient. The protein is NADH-quinone oxidoreductase subunit C/D of Psychrobacter sp. (strain PRwf-1).